A 431-amino-acid chain; its full sequence is Histidinol dehydrogenase (431 aa).

Residues Tyr127, Gln189, and Asn212 each coordinate NAD(+). Residues Ser237, Gln259, and His262 each contribute to the substrate site. Zn(2+) is bound by residues Gln259 and His262. Active-site proton acceptor residues include Glu326 and His327. Substrate contacts are provided by His327, Asp360, Glu414, and His419. Residue Asp360 participates in Zn(2+) binding. His419 provides a ligand contact to Zn(2+).

Belongs to the histidinol dehydrogenase family. Zn(2+) is required as a cofactor.

The catalysed reaction is L-histidinol + 2 NAD(+) + H2O = L-histidine + 2 NADH + 3 H(+). It functions in the pathway amino-acid biosynthesis; L-histidine biosynthesis; L-histidine from 5-phospho-alpha-D-ribose 1-diphosphate: step 9/9. Functionally, catalyzes the sequential NAD-dependent oxidations of L-histidinol to L-histidinaldehyde and then to L-histidine. The sequence is that of Histidinol dehydrogenase from Xanthomonas campestris pv. campestris (strain ATCC 33913 / DSM 3586 / NCPPB 528 / LMG 568 / P 25).